The following is a 474-amino-acid chain: Bifunctional protein GlmU (474 aa).

The tract at residues 1-232 is pyrophosphorylase; the sequence is MSALDVIIMA…ALQVAGVNSP (232 aa). Residues Lys-23, Gln-78, 83–84, 105–107, Gly-142, Glu-157, and Asn-230 each bind UDP-N-acetyl-alpha-D-glucosamine; these read GT and SGD. Residue Asp-107 participates in Mg(2+) binding. Asn-230 contributes to the Mg(2+) binding site. The interval 233 to 253 is linker; sequence LQLAELERAHQLAQARALMEQ. Residues 254-474 form an N-acetyltransferase region; the sequence is GVRLADPARF…WQRPAKLPKA (221 aa). Residues Arg-349 and Lys-367 each contribute to the UDP-N-acetyl-alpha-D-glucosamine site. His-379 functions as the Proton acceptor in the catalytic mechanism. The UDP-N-acetyl-alpha-D-glucosamine site is built by Tyr-382 and Asn-393. Acetyl-CoA contacts are provided by residues Ala-396, 402 to 403, Ser-421, Gly-439, and Arg-456; that span reads NY. The segment at 454 to 474 is disordered; that stretch reads VARGKQVTKENWQRPAKLPKA.

It in the N-terminal section; belongs to the N-acetylglucosamine-1-phosphate uridyltransferase family. This sequence in the C-terminal section; belongs to the transferase hexapeptide repeat family. In terms of assembly, homotrimer. Requires Mg(2+) as cofactor.

It is found in the cytoplasm. The enzyme catalyses alpha-D-glucosamine 1-phosphate + acetyl-CoA = N-acetyl-alpha-D-glucosamine 1-phosphate + CoA + H(+). It catalyses the reaction N-acetyl-alpha-D-glucosamine 1-phosphate + UTP + H(+) = UDP-N-acetyl-alpha-D-glucosamine + diphosphate. It participates in nucleotide-sugar biosynthesis; UDP-N-acetyl-alpha-D-glucosamine biosynthesis; N-acetyl-alpha-D-glucosamine 1-phosphate from alpha-D-glucosamine 6-phosphate (route II): step 2/2. It functions in the pathway nucleotide-sugar biosynthesis; UDP-N-acetyl-alpha-D-glucosamine biosynthesis; UDP-N-acetyl-alpha-D-glucosamine from N-acetyl-alpha-D-glucosamine 1-phosphate: step 1/1. Its pathway is bacterial outer membrane biogenesis; LPS lipid A biosynthesis. In terms of biological role, catalyzes the last two sequential reactions in the de novo biosynthetic pathway for UDP-N-acetylglucosamine (UDP-GlcNAc). The C-terminal domain catalyzes the transfer of acetyl group from acetyl coenzyme A to glucosamine-1-phosphate (GlcN-1-P) to produce N-acetylglucosamine-1-phosphate (GlcNAc-1-P), which is converted into UDP-GlcNAc by the transfer of uridine 5-monophosphate (from uridine 5-triphosphate), a reaction catalyzed by the N-terminal domain. The sequence is that of Bifunctional protein GlmU from Paracidovorax citrulli (strain AAC00-1) (Acidovorax citrulli).